The sequence spans 67 residues: Theromin (67 aa).

The 26-residue stretch at 2 to 27 (CENTECPRACPGEYEFDEDGCNTCVC) folds into the Antistasin-like domain.

In terms of assembly, homodimer. Post-translationally, eight disulfide bonds are present.

Its subcellular location is the secreted. Potent thrombin-specific inhibitor. The chain is Theromin from Theromyzon tessulatum (Duck leech).